Consider the following 230-residue polypeptide: Cutinase (230 aa).

A signal peptide spans 1–16 (MKFFALTTFLAATASA). The cysteines at positions 47 and 125 are disulfide-linked. The active-site Nucleophile is the S136. Residues C187 and C194 are joined by a disulfide bond. Residue D191 is part of the active site. The active-site Proton donor/acceptor is the H204.

The protein belongs to the cutinase family. The 2 disulfide bonds play a critical role in holding the catalytic residues in juxta-position; reduction of the disulfide bridges results in the complete inactivation of the enzyme.

Its subcellular location is the secreted. The catalysed reaction is cutin + H2O = cutin monomers.. Catalyzes the hydrolysis of complex carboxylic polyesters found in the cell wall of plants. Degrades cutin, a macromolecule that forms the structure of the plant cuticle. Allows pathogenic fungi to penetrate through the cuticular barrier into the host plant during the initial stage of fungal infection. The sequence is that of Cutinase (CUTA) from Fusarium solani subsp. cucurbitae (Neocosmosporum cucurbitae).